The sequence spans 209 residues: Large ribosomal subunit protein uL3 (209 aa).

Gln-150 carries the N5-methylglutamine modification.

This sequence belongs to the universal ribosomal protein uL3 family. As to quaternary structure, part of the 50S ribosomal subunit. Forms a cluster with proteins L14 and L19. In terms of processing, methylated by PrmB.

Its function is as follows. One of the primary rRNA binding proteins, it binds directly near the 3'-end of the 23S rRNA, where it nucleates assembly of the 50S subunit. This Ectopseudomonas mendocina (strain ymp) (Pseudomonas mendocina) protein is Large ribosomal subunit protein uL3.